We begin with the raw amino-acid sequence, 162 residues long: Troponin C, skeletal muscle (162 aa).

4 consecutive EF-hand domains span residues 17-52, 53-88, 93-128, and 129-162; these read EMIA…LGQN, PTKE…QMKE, KSEE…TGEH, and VTEE…EGVQ. Residues D30, D32, D36, E41, D66, D68, S70, T72, E77, D106, N108, D110, E117, D142, N144, D146, R148, and E153 each coordinate Ca(2+).

This sequence belongs to the troponin C family.

Functionally, troponin is the central regulatory protein of striated muscle contraction. Tn consists of three components: Tn-I which is the inhibitor of actomyosin ATPase, Tn-T which contains the binding site for tropomyosin and Tn-C. The binding of calcium to Tn-C abolishes the inhibitory action of Tn on actin filaments. This is Troponin C, skeletal muscle (TNNC2) from Meleagris gallopavo (Wild turkey).